A 700-amino-acid chain; its full sequence is ATP-dependent DNA helicase UvrD2 (700 aa).

A UvrD-like helicase ATP-binding domain is found at 10–301 (AGLDDQQREA…VRLERDYRST (292 aa)). ATP contacts are provided by residues 34 to 39 (GTGKTR) and Arg-299. The UvrD-like helicase C-terminal domain occupies 302–553 (PQVVSLANRV…LYVGITRARV (252 aa)). Residues 565-595 (PGGRQSRKPSRFLNGIAPQTRADPVPGTSRR) form a disordered region. An HRDC domain is found at 626-700 (ADVDEELLLQ…DVLQLVRGRT (75 aa)).

Belongs to the helicase family. UvrD subfamily. Mg(2+) is required as a cofactor.

The catalysed reaction is Couples ATP hydrolysis with the unwinding of duplex DNA by translocating in the 3'-5' direction.. The enzyme catalyses ATP + H2O = ADP + phosphate + H(+). DNA-dependent ATPase, stimulated equally by ss- and dsDNA. Has both ATPase and helicase activities. The protein is ATP-dependent DNA helicase UvrD2 (uvrD2) of Mycobacterium bovis (strain ATCC BAA-935 / AF2122/97).